We begin with the raw amino-acid sequence, 120 residues long: UPF0231 protein ETA_08290 (120 aa).

This sequence belongs to the UPF0231 family.

This Erwinia tasmaniensis (strain DSM 17950 / CFBP 7177 / CIP 109463 / NCPPB 4357 / Et1/99) protein is UPF0231 protein ETA_08290.